The following is a 103-amino-acid chain: Nucleoid-associated protein CFF8240_0066 (103 aa).

This sequence belongs to the YbaB/EbfC family. As to quaternary structure, homodimer.

It localises to the cytoplasm. The protein resides in the nucleoid. Binds to DNA and alters its conformation. May be involved in regulation of gene expression, nucleoid organization and DNA protection. The chain is Nucleoid-associated protein CFF8240_0066 from Campylobacter fetus subsp. fetus (strain 82-40).